The chain runs to 108 residues: DNA-directed RNA polymerase III subunit RPC10 (108 aa).

Zn(2+) contacts are provided by Cys5, Cys8, Cys25, Cys28, Cys69, and Cys72. The C4-type zinc-finger motif lies at 5–28 (CPGCGNGLIVEEGQRCHRFACNTC). The segment at 65–107 (TAEPCPKCEHPRAYFMQLQTRSADEPMTTFYKCCNAQCGHRWR) adopts a TFIIS-type zinc-finger fold. Residues 88-89 (DE) carry the Hairpin motif. 2 residues coordinate Zn(2+): Cys98 and Cys102.

This sequence belongs to the archaeal RpoM/eukaryotic RPA12/RPB9/RPC11 RNA polymerase family. As to quaternary structure, component of the RNA polymerase III complex consisting of 17 subunits: a ten-subunit horseshoe-shaped catalytic core composed of POLR3A/RPC1, POLR3B/RPC2, POLR1C/RPAC1, POLR1D/RPAC2, POLR3K/RPC10, POLR2E/RPABC1, POLR2F/RPABC2, POLR2H/RPABC3, POLR2K/RPABC4 and POLR2L/RPABC5; a mobile stalk composed of two subunits POLR3H/RPC8 and CRCP/RPC9, protruding from the core and functioning primarily in transcription initiation; and additional subunits homologous to general transcription factors of the RNA polymerase II machinery, POLR3C/RPC3-POLR3F/RPC6-POLR3G/RPC7 heterotrimer required for transcription initiation and POLR3D/RPC4-POLR3E/RPC5 heterodimer involved in both transcription initiation and termination.

The protein resides in the nucleus. In terms of biological role, core component of RNA polymerase III (Pol III) which synthesizes small non-coding RNAs using the four ribonucleoside triphosphates as substrates. Can mediate Pol I proofreading of the nascent RNA transcript. Anchors into the Pol III active site to constantly monitor transcription fidelity, cleaves mis-incorporated 5'-ribonucleotides and restarts the transcription process. Once Pol III reaches the poly(dT) termination signal, can induce Pol III clamp opening and transcription termination. Pol III plays an important role in sensing and limiting infection by intracellular bacteria and DNA viruses. Acts as a nuclear and cytosolic DNA sensor involved in innate immune response. Can sense non-self dsDNA that serves as template for transcription into dsRNA. The non-self RNA polymerase III transcripts, such as Epstein-Barr virus-encoded RNAs (EBERs) induce type I interferon and NF-kappa-B through the RIG-I pathway. The protein is DNA-directed RNA polymerase III subunit RPC10 of Mus musculus (Mouse).